The sequence spans 379 residues: MQEALALFFGSESLLVGTIIPFLFVLTVVVFVHEMGHYLVARWCGIGAQAFSIGFGPELLGFTDRHGTRWKLSAIPLVGYVKFIGDESETSSPVGVNESALSEEDRKRAFHTQPVWKRAATVFAGPAFNIILTIAIFSVFFALYGRQIADPLIAGVQPGSPAAEAGFEPGDRFVSVEGEKITTFADVQRIVSGRAGDKLNFTVERDGKMVDLQAVPKIVERTDPLGNKVKLGAIGVETTEAVGNFRRIEYGPLESVGQAVIETGHIIGRTGEFFKRFAVGREDKCQLGGPVKIATMASKAASQGFDWLIQLMAMLSIGIGLLNLFPLPPLDGGHLVFYAVEAIKGSPVSGAAQEIFYRIGFLLVMGFMGFVLFNDLFAC.

Zn(2+) is bound at residue His-33. Glu-34 is a catalytic residue. His-37 is a Zn(2+) binding site. Transmembrane regions (helical) follow at residues 39-61 (LVAR…ELLG), 122-144 (VFAG…FALY), 305-327 (FDWL…LFPL), and 355-377 (IFYR…NDLF). The 76-residue stretch at 133-208 (TIAIFSVFFA…LNFTVERDGK (76 aa)) folds into the PDZ domain.

The protein belongs to the peptidase M50B family. The cofactor is Zn(2+).

It localises to the cell inner membrane. This chain is Putative zinc metalloprotease BMEI0829, found in Brucella melitensis biotype 1 (strain ATCC 23456 / CCUG 17765 / NCTC 10094 / 16M).